The following is a 226-amino-acid chain: Biosynthetic peptidoglycan transglycosylase (226 aa).

A helical membrane pass occupies residues 8–28 (FFGWTWFVMWRFLLLLALLLL).

The protein belongs to the glycosyltransferase 51 family.

Its subcellular location is the cell inner membrane. It carries out the reaction [GlcNAc-(1-&gt;4)-Mur2Ac(oyl-L-Ala-gamma-D-Glu-L-Lys-D-Ala-D-Ala)](n)-di-trans,octa-cis-undecaprenyl diphosphate + beta-D-GlcNAc-(1-&gt;4)-Mur2Ac(oyl-L-Ala-gamma-D-Glu-L-Lys-D-Ala-D-Ala)-di-trans,octa-cis-undecaprenyl diphosphate = [GlcNAc-(1-&gt;4)-Mur2Ac(oyl-L-Ala-gamma-D-Glu-L-Lys-D-Ala-D-Ala)](n+1)-di-trans,octa-cis-undecaprenyl diphosphate + di-trans,octa-cis-undecaprenyl diphosphate + H(+). The protein operates within cell wall biogenesis; peptidoglycan biosynthesis. Functionally, peptidoglycan polymerase that catalyzes glycan chain elongation from lipid-linked precursors. The sequence is that of Biosynthetic peptidoglycan transglycosylase from Shewanella frigidimarina (strain NCIMB 400).